A 286-amino-acid chain; its full sequence is Bifunctional protein FolD (286 aa).

NADP(+) is bound by residues 164–166 (GRS), Ser193, and Ile234.

It belongs to the tetrahydrofolate dehydrogenase/cyclohydrolase family. As to quaternary structure, homodimer.

The enzyme catalyses (6R)-5,10-methylene-5,6,7,8-tetrahydrofolate + NADP(+) = (6R)-5,10-methenyltetrahydrofolate + NADPH. It carries out the reaction (6R)-5,10-methenyltetrahydrofolate + H2O = (6R)-10-formyltetrahydrofolate + H(+). Its pathway is one-carbon metabolism; tetrahydrofolate interconversion. Catalyzes the oxidation of 5,10-methylenetetrahydrofolate to 5,10-methenyltetrahydrofolate and then the hydrolysis of 5,10-methenyltetrahydrofolate to 10-formyltetrahydrofolate. The polypeptide is Bifunctional protein FolD (Nitratidesulfovibrio vulgaris (strain ATCC 29579 / DSM 644 / CCUG 34227 / NCIMB 8303 / VKM B-1760 / Hildenborough) (Desulfovibrio vulgaris)).